Here is a 198-residue protein sequence, read N- to C-terminus: Na(+)-translocating NADH-quinone reductase subunit E (198 aa).

Transmembrane regions (helical) follow at residues 11-31 (SIFI…FLAV), 39-59 (FGLG…NNLV), 77-97 (FLNF…LEMI), 110-130 (GIFL…SFMV), 140-160 (VVYG…LAGI), and 176-196 (LGIT…FSGV).

The protein belongs to the NqrDE/RnfAE family. Composed of six subunits; NqrA, NqrB, NqrC, NqrD, NqrE and NqrF.

The protein resides in the cell inner membrane. It carries out the reaction a ubiquinone + n Na(+)(in) + NADH + H(+) = a ubiquinol + n Na(+)(out) + NAD(+). NQR complex catalyzes the reduction of ubiquinone-1 to ubiquinol by two successive reactions, coupled with the transport of Na(+) ions from the cytoplasm to the periplasm. NqrA to NqrE are probably involved in the second step, the conversion of ubisemiquinone to ubiquinol. The polypeptide is Na(+)-translocating NADH-quinone reductase subunit E (Vibrio vulnificus (strain CMCP6)).